Here is a 617-residue protein sequence, read N- to C-terminus: Protein fem-1 homolog C (617 aa).

ANK repeat units lie at residues 2–31 (DLKT…KDDV), 40–70 (NGAT…SVEI), 82–111 (EGAP…SVNN), 115–144 (TNST…DLEV), 148–177 (HGHT…DVNR), 181–210 (KGNT…RMEK), and 213–242 (YGMT…TSKN). 2 TPR repeats span residues 245–279 (INAL…RHSD) and 338–371 (SYYI…QQNN). ANK repeat units follow at residues 481-523 (NNFS…DVNV) and 527-556 (EQNS…HFDS).

It belongs to the fem-1 family. As to quaternary structure, component of a CRL2 E3 ubiquitin-protein ligase complex, also named ECS (Elongin BC-CUL2/5-SOCS-box protein) complex.

It functions in the pathway protein modification; protein ubiquitination. Functionally, substrate-recognition component of a Cul2-RING (CRL2) E3 ubiquitin-protein ligase complex of the DesCEND (destruction via C-end degrons) pathway, which recognizes a C-degron located at the extreme C terminus of target proteins, leading to their ubiquitination and degradation. The C-degron recognized by the DesCEND pathway is usually a motif of less than ten residues and can be present in full-length proteins, truncated proteins or proteolytically cleaved forms. The CRL2(FEM1C) complex specifically recognizes proteins with an arginine at the C-terminus: recognizes and binds proteins ending with -Lys/Arg-Xaa-Arg and -Lys/Arg-Xaa-Xaa-Arg C-degrons, leading to their ubiquitination and degradation. The sequence is that of Protein fem-1 homolog C from Xenopus laevis (African clawed frog).